The following is a 404-amino-acid chain: MSDSKEPSVQQLGLLEEEQLRGLGFRQTRGYKSLAGCLGHGALVLQLLSFTLLAGLLIQVSKFPSSISQEQSKQDAIYQNLTQLKAAVGELSEKSKLQEIYQELTQLKAAVGELPEKSKQQEIYQELTQLKAAVGELPEKSKQQEIYQELTQLKAAVGELPEKSKQQEIYQELTRLKAAVGELPEKSQQQEIYQELTQLKAAVGELPEKSKQQEIYQELTRLKAAVGELPEKSKQQEIYQELTQLKAAVERLCRPCPWEWTFFQGNCYFMSNSQRDWHDSVTACQEVGAQLVVIKSAEEQNFLQLQSSRSNRFAWMGLSDLNQEGTWQWVDGSPLSPSFKQYWNRGEPNNVGEEDCAEFSGNGWNDDKCNLAKFWICKKSAASCSRDEEQFLSPAPATPNPPPA.

Residues 1-37 are Cytoplasmic-facing; sequence MSDSKEPSVQQLGLLEEEQLRGLGFRQTRGYKSLAGC. 3 consecutive short sequence motifs (endocytosis signal) follow at residues 14–15, 16–18, and 31–34; these read LL, EEE, and YKSL. The helical; Signal-anchor for type II membrane protein transmembrane segment at 38 to 58 threads the bilayer; sequence LGHGALVLQLLSFTLLAGLLI. Residues 59-404 are Extracellular-facing; it reads QVSKFPSSIS…APATPNPPPA (346 aa). N-linked (GlcNAc...) asparagine glycosylation occurs at asparagine 80. A run of 7 repeats spans residues 96–118, 119–141, 142–164, 165–187, 188–210, 211–233, and 234–257. The 7 X approximate tandem repeats stretch occupies residues 96–257; the sequence is KLQEIYQELT…AVERLCRPCP (162 aa). 3 disulfides stabilise this stretch: cysteine 256/cysteine 267, cysteine 284/cysteine 377, and cysteine 356/cysteine 369. Positions 263–378 constitute a C-type lectin domain; the sequence is FQGNCYFMSN…CNLAKFWICK (116 aa). 6 residues coordinate Ca(2+): glutamate 347, asparagine 349, valine 351, glutamate 354, asparagine 365, and aspartate 366.

In terms of assembly, homotetramer. Interacts with C1QBP; the interaction is indicative for a C1q:C1QBP:CD209 signaling complex. Interacts with ICAM2 and ICAM3 by binding to mannose-like carbohydrates. Interacts (via C-type lectin domain) with CEACAM1 (via Lewis X moieties); this interaction is regulated by the glycosylation pattern of CEACAM1 on cell types and regulates contact between dendritic cells and neutrophils.

It is found in the membrane. In terms of biological role, pathogen-recognition receptor expressed on the surface of immature dendritic cells (DCs) and involved in initiation of primary immune response. Thought to mediate the endocytosis of pathogens which are subsequently degraded in lysosomal compartments. The receptor returns to the cell membrane surface and the pathogen-derived antigens are presented to resting T-cells via MHC class II proteins to initiate the adaptive immune response. Probably recognizes in a calcium-dependent manner high mannose N-linked oligosaccharides in a variety of pathogen antigens. On DCs it is a high affinity receptor for ICAM2 and ICAM3 by binding to mannose-like carbohydrates. May act as a DC rolling receptor that mediates transendothelial migration of DC presursors from blood to tissues by binding endothelial ICAM2. Seems to regulate DC-induced T-cell proliferation by binding to ICAM3 on T-cells in the immunological synapse formed between DC and T-cells. The sequence is that of CD209 antigen (CD209) from Nomascus concolor (Black crested gibbon).